Reading from the N-terminus, the 142-residue chain is Nucleoside diphosphate kinase (142 aa).

The ATP site is built by lysine 11, phenylalanine 59, arginine 87, threonine 93, arginine 107, and asparagine 117. The active-site Pros-phosphohistidine intermediate is histidine 120.

This sequence belongs to the NDK family. As to quaternary structure, homotetramer. It depends on Mg(2+) as a cofactor.

The protein localises to the cytoplasm. It carries out the reaction a 2'-deoxyribonucleoside 5'-diphosphate + ATP = a 2'-deoxyribonucleoside 5'-triphosphate + ADP. The enzyme catalyses a ribonucleoside 5'-diphosphate + ATP = a ribonucleoside 5'-triphosphate + ADP. Major role in the synthesis of nucleoside triphosphates other than ATP. The ATP gamma phosphate is transferred to the NDP beta phosphate via a ping-pong mechanism, using a phosphorylated active-site intermediate. The polypeptide is Nucleoside diphosphate kinase (Aquifex aeolicus (strain VF5)).